A 381-amino-acid chain; its full sequence is Cyclin-dependent kinase inhibitor CIP1 (381 aa).

Residues methionine 1–histidine 11 show a composition bias toward basic residues. Positions methionine 1–aspartate 30 are disordered. The span at arginine 17–aspartate 30 shows a compositional bias: basic and acidic residues. Phosphothreonine occurs at positions 65, 69, and 73.

In terms of assembly, interact with the CDC28/CLN2 complex. In terms of processing, phosphorylated during S phase in a CDC28-dependent manner. Phosphorylated at Thr-65 and Thr-73 by HOG1 under osmotic stress. The phosphorylations of Thr-65 and Thr-73 are necessary for CIP1-induced growth inhibition.

The protein resides in the cytoplasm. It is found in the nucleus. In terms of biological role, acts as an inhibitor of the CDC28/CLN2 cyclin-dependent kinase complex. Stabilizes the CDC28 inhibitor SIC1. Negatively regulates the G1/S phase transition. Contributes to osmostress-induced transitory G1 delay. This chain is Cyclin-dependent kinase inhibitor CIP1, found in Saccharomyces cerevisiae (strain ATCC 204508 / S288c) (Baker's yeast).